The primary structure comprises 167 residues: NADH-quinone oxidoreductase subunit B 2 (167 aa).

Positions 38, 39, 103, and 132 each coordinate [4Fe-4S] cluster.

It belongs to the complex I 20 kDa subunit family. In terms of assembly, NDH-1 is composed of 14 different subunits. Subunits NuoB, C, D, E, F, and G constitute the peripheral sector of the complex. Requires [4Fe-4S] cluster as cofactor.

The protein resides in the cell inner membrane. It carries out the reaction a quinone + NADH + 5 H(+)(in) = a quinol + NAD(+) + 4 H(+)(out). Functionally, NDH-1 shuttles electrons from NADH, via FMN and iron-sulfur (Fe-S) centers, to quinones in the respiratory chain. The immediate electron acceptor for the enzyme in this species is believed to be ubiquinone. Couples the redox reaction to proton translocation (for every two electrons transferred, four hydrogen ions are translocated across the cytoplasmic membrane), and thus conserves the redox energy in a proton gradient. This Rhizobium meliloti (strain 1021) (Ensifer meliloti) protein is NADH-quinone oxidoreductase subunit B 2.